A 518-amino-acid chain; its full sequence is Glutamate--cysteine ligase (518 aa).

The protein belongs to the glutamate--cysteine ligase type 1 family. Type 1 subfamily.

It carries out the reaction L-cysteine + L-glutamate + ATP = gamma-L-glutamyl-L-cysteine + ADP + phosphate + H(+). It functions in the pathway sulfur metabolism; glutathione biosynthesis; glutathione from L-cysteine and L-glutamate: step 1/2. This Escherichia coli O7:K1 (strain IAI39 / ExPEC) protein is Glutamate--cysteine ligase.